Here is a 614-residue protein sequence, read N- to C-terminus: V-type proton ATPase catalytic subunit A isoform 1 (614 aa).

An ATP-binding site is contributed by 247-254 (GAFGCGKT).

The protein belongs to the ATPase alpha/beta chains family. In terms of assembly, V-ATPase is a heteromultimeric enzyme made up of two complexes: the ATP-hydrolytic V1 complex and the proton translocation V0 complex. The V1 complex consists of three catalytic AB heterodimers that form a heterohexamer, three peripheral stalks each consisting of EG heterodimers, one central rotor including subunits D and F, and the regulatory subunits C and H. The proton translocation complex V0 consists of the proton transport subunit a, a ring of proteolipid subunits c9c'', rotary subunit d, subunits e and f, and the accessory subunits VhaAC45 and ATP6AP2.

It catalyses the reaction ATP + H2O + 4 H(+)(in) = ADP + phosphate + 5 H(+)(out). ATP hydrolysis occurs at the interface between the nucleotide-binding domains of subunits A and B. ATP hydrolysis triggers a conformational change in the subunits D and F, which induces a shift of subunit d. The c-ring is subsequently rotated and results in a continuous proton translocation across the membrane. In terms of biological role, catalytic subunit of the V1 complex of vacuolar(H+)-ATPase (V-ATPase), a multisubunit enzyme composed of a peripheral complex (V1) that hydrolyzes ATP and a membrane integral complex (V0) that translocates protons. V-ATPase is responsible for acidifying and maintaining the pH of intracellular compartments and in some cell types, is targeted to the plasma membrane, where it is responsible for acidifying the extracellular environment. The protein is V-type proton ATPase catalytic subunit A isoform 1 (Vha68-1) of Drosophila melanogaster (Fruit fly).